The sequence spans 646 residues: ATP-dependent rRNA helicase SPB4 (646 aa).

The Q motif motif lies at 15–43; it reads WGALTPSLAPWILDYLSSMGFEQPTPVQK. In terms of domain architecture, Helicase ATP-binding spans 46–247; the sequence is FDIFRGNKDV…TVGLLYPHKI (202 aa). 59-66 contributes to the ATP binding site; that stretch reads AVTGSGKT. Positions 195-198 match the DEAD box motif; the sequence is DEAD. Positions 284 to 434 constitute a Helicase C-terminal domain; the sequence is ALCQLLERLE…PLAKPPVSVT (151 aa). Composition is skewed to basic and acidic residues over residues 539–548 and 566–581; these read KKEKAAREAQ and NEAWSGKHEHEDVKAA. Positions 539-646 are disordered; that stretch reads KKEKAAREAQ…GGDEFEGFDD (108 aa). Residues 572-623 are a coiled coil; sequence KHEHEDVKAARREKKRRKREAQRLGDMTEPEREEQRKLDEMIAEVRRRNAEA. Positions 582–591 are enriched in basic residues; that stretch reads RREKKRRKRE. Residues 600 to 621 show a composition bias toward basic and acidic residues; that stretch reads EPEREEQRKLDEMIAEVRRRNA. A compositionally biased stretch (low complexity) spans 622–631; it reads EAPTPAAQAA.

This sequence belongs to the DEAD box helicase family. DDX55/SPB4 subfamily. In terms of assembly, component of pre-60S ribosomal complexes.

The protein localises to the nucleus. Its subcellular location is the nucleolus. The catalysed reaction is ATP + H2O = ADP + phosphate + H(+). Its function is as follows. ATP-binding RNA helicase involved in the biogenesis of 60S ribosomal subunits. Binds 90S pre-ribosomal particles and dissociates from pre-60S ribosomal particles after processing of 27SB pre-rRNA. Required for the normal formation of 18S rRNA through the processing of pre-rRNAs at sites A0, A1 and A2, and the normal formation of 25S and 5.8S rRNAs through the processing of pre-rRNAs at sites C1 and C2. This is ATP-dependent rRNA helicase SPB4 from Chaetomium globosum (strain ATCC 6205 / CBS 148.51 / DSM 1962 / NBRC 6347 / NRRL 1970) (Soil fungus).